We begin with the raw amino-acid sequence, 206 residues long: dITP/XTP pyrophosphatase (206 aa).

Residue 10–15 (SRNAKK) participates in substrate binding. Aspartate 75 acts as the Proton acceptor in catalysis. Position 75 (aspartate 75) interacts with Mg(2+). Substrate contacts are provided by residues serine 76, 158–161 (FGYD), lysine 181, and 186–187 (HR).

It belongs to the HAM1 NTPase family. In terms of assembly, homodimer. Mg(2+) is required as a cofactor.

It catalyses the reaction XTP + H2O = XMP + diphosphate + H(+). The enzyme catalyses dITP + H2O = dIMP + diphosphate + H(+). The catalysed reaction is ITP + H2O = IMP + diphosphate + H(+). Its function is as follows. Pyrophosphatase that catalyzes the hydrolysis of nucleoside triphosphates to their monophosphate derivatives, with a high preference for the non-canonical purine nucleotides XTP (xanthosine triphosphate), dITP (deoxyinosine triphosphate) and ITP. Seems to function as a house-cleaning enzyme that removes non-canonical purine nucleotides from the nucleotide pool, thus preventing their incorporation into DNA/RNA and avoiding chromosomal lesions. This is dITP/XTP pyrophosphatase from Nocardia farcinica (strain IFM 10152).